A 477-amino-acid polypeptide reads, in one-letter code: Multidrug resistance protein PmpM (477 aa).

Helical transmembrane passes span 21–41 (LLTL…MGFV), 56–76 (AVAL…GTLL), 104–124 (LALL…EPIL), 133–153 (LIGP…AAAL), 171–191 (MVLG…LIYG), 202–222 (GCGW…LFWV), 253–273 (LPIG…ALLI), 286–306 (IALN…MAVT), 326–346 (GVGM…MLLL), 360–380 (VIAI…SDAL), 398–418 (MIMT…SLGL), and 431–451 (LWQG…IRLA).

The protein belongs to the multi antimicrobial extrusion (MATE) (TC 2.A.66.1) family.

The protein resides in the cell inner membrane. Multidrug efflux pump that functions as an H(+)/drug antiporter. Confers resistance to benzalkonium chloride, fluoroquinolones, ethidium bromide, acriflavine and tetraphenylphosphonium chloride. This chain is Multidrug resistance protein PmpM (pmpM), found in Pseudomonas aeruginosa (strain ATCC 15692 / DSM 22644 / CIP 104116 / JCM 14847 / LMG 12228 / 1C / PRS 101 / PAO1).